The following is a 484-amino-acid chain: Ferrochelatase-2, chloroplastic (484 aa).

The protein belongs to the ferrochelatase family.

The protein resides in the plastid. It is found in the chloroplast. It catalyses the reaction heme b + 2 H(+) = protoporphyrin IX + Fe(2+). The protein operates within porphyrin-containing compound metabolism; protoheme biosynthesis; protoheme from protoporphyrin-IX: step 1/1. Catalyzes the ferrous insertion into protoporphyrin IX. In Hordeum vulgare (Barley), this protein is Ferrochelatase-2, chloroplastic (HEMH).